The following is a 186-amino-acid chain: dCTP deaminase (186 aa).

Residue 107–112 (KSTYAR) participates in dCTP binding. Catalysis depends on E133, which acts as the Proton donor/acceptor. Q152, Y166, and Q176 together coordinate dCTP.

Belongs to the dCTP deaminase family. Homotrimer.

The enzyme catalyses dCTP + H2O + H(+) = dUTP + NH4(+). It participates in pyrimidine metabolism; dUMP biosynthesis; dUMP from dCTP (dUTP route): step 1/2. Functionally, catalyzes the deamination of dCTP to dUTP. The sequence is that of dCTP deaminase from Campylobacter concisus (strain 13826).